The following is a 445-amino-acid chain: Argininosuccinate synthase (445 aa).

Residues 17-25 (AFSGGLDTS) and A43 contribute to the ATP site. Position 99 (Y99) interacts with L-citrulline. G129 and T131 together coordinate ATP. T131, N135, and D136 together coordinate L-aspartate. Position 135 (N135) interacts with L-citrulline. D136 serves as a coordination point for ATP. L-citrulline is bound by residues R139 and S192. D194 contributes to the ATP binding site. Residues T201, E203, and E280 each contribute to the L-citrulline site.

Belongs to the argininosuccinate synthase family. Type 2 subfamily. In terms of assembly, homotetramer.

It localises to the cytoplasm. It carries out the reaction L-citrulline + L-aspartate + ATP = 2-(N(omega)-L-arginino)succinate + AMP + diphosphate + H(+). The protein operates within amino-acid biosynthesis; L-arginine biosynthesis; L-arginine from L-ornithine and carbamoyl phosphate: step 2/3. The sequence is that of Argininosuccinate synthase from Rhodopseudomonas palustris (strain BisA53).